Consider the following 218-residue polypeptide: MSNSSSVYDWFQERLEIQDITDDVTSKYVPPHVNIFYCLGGITLVCFLIQFATGFAMTFYYKPTVTQAYNSVSYLMTDVSFGWLIRSVHRWSASMMVLMLILHVFRVYLTGGFKRPRELTWVTGVVMAVITVAFGVTGYSLPWDQVGYWAVKIVSGVPAAIPIIGDFMVELLRGGESVGQSTLTRFYSLHTFVLPWSLAVFMLMHFLMIRKQGISGPL.

A helical membrane pass occupies residues 35–55 (IFYCLGGITLVCFLIQFATGF). Cysteine 38 contacts heme c. Histidine 89 and histidine 103 together coordinate heme b. 3 consecutive transmembrane segments (helical) span residues 93–113 (ASMM…TGGF), 119–139 (LTWV…VTGY), and 189–209 (LHTF…FLMI). The heme b site is built by histidine 190 and histidine 205.

It belongs to the cytochrome b family. PetB subfamily. In terms of assembly, the 4 large subunits of the cytochrome b6-f complex are cytochrome b6, subunit IV (17 kDa polypeptide, PetD), cytochrome f and the Rieske protein, while the 4 small subunits are PetG, PetL, PetM and PetN. The complex functions as a dimer. It depends on heme b as a cofactor. Heme c serves as cofactor.

The protein resides in the cellular thylakoid membrane. Functionally, component of the cytochrome b6-f complex, which mediates electron transfer between photosystem II (PSII) and photosystem I (PSI), cyclic electron flow around PSI, and state transitions. The sequence is that of Cytochrome b6 from Prochlorococcus marinus (strain MIT 9515).